The primary structure comprises 267 residues: tRNA pseudouridine synthase A (267 aa).

Residue aspartate 51 is the Nucleophile of the active site. Tyrosine 109 serves as a coordination point for substrate.

Belongs to the tRNA pseudouridine synthase TruA family. In terms of assembly, homodimer.

The catalysed reaction is uridine(38/39/40) in tRNA = pseudouridine(38/39/40) in tRNA. Functionally, formation of pseudouridine at positions 38, 39 and 40 in the anticodon stem and loop of transfer RNAs. This chain is tRNA pseudouridine synthase A, found in Staphylococcus aureus (strain USA300).